We begin with the raw amino-acid sequence, 538 residues long: Bifunctional purine biosynthesis protein PurH (538 aa).

The 151-residue stretch at 8–158 (IPAPDKVQVK…KNHAYVTTLT (151 aa)) folds into the MGS-like domain.

Belongs to the PurH family.

It carries out the reaction (6R)-10-formyltetrahydrofolate + 5-amino-1-(5-phospho-beta-D-ribosyl)imidazole-4-carboxamide = 5-formamido-1-(5-phospho-D-ribosyl)imidazole-4-carboxamide + (6S)-5,6,7,8-tetrahydrofolate. It catalyses the reaction IMP + H2O = 5-formamido-1-(5-phospho-D-ribosyl)imidazole-4-carboxamide. The protein operates within purine metabolism; IMP biosynthesis via de novo pathway; 5-formamido-1-(5-phospho-D-ribosyl)imidazole-4-carboxamide from 5-amino-1-(5-phospho-D-ribosyl)imidazole-4-carboxamide (10-formyl THF route): step 1/1. Its pathway is purine metabolism; IMP biosynthesis via de novo pathway; IMP from 5-formamido-1-(5-phospho-D-ribosyl)imidazole-4-carboxamide: step 1/1. This Rhizobium rhizogenes (strain K84 / ATCC BAA-868) (Agrobacterium radiobacter) protein is Bifunctional purine biosynthesis protein PurH.